Consider the following 430-residue polypeptide: Zinc carboxypeptidase A 1 (430 aa).

The signal sequence occupies residues 1 to 22; sequence MSLNKCLLFALLAIVASASVSA. The region spanning 124 to 423 is the Peptidase M14 domain; that stretch reads QYYELDDTYA…DSIVAMATEV (300 aa). Positions 187 and 190 each coordinate Zn(2+). A disulfide bond links cysteine 252 and cysteine 275. Histidine 311 provides a ligand contact to Zn(2+). Glutamate 386 functions as the Proton donor/acceptor in the catalytic mechanism.

Belongs to the peptidase M14 family. It depends on Zn(2+) as a cofactor.

Its subcellular location is the secreted. The chain is Zinc carboxypeptidase A 1 from Drosophila melanogaster (Fruit fly).